The sequence spans 138 residues: Basic phospholipase A2 BP-I (138 aa).

Residues 1–16 (MRTLWIMAVLLLGVDG) form the signal peptide. Intrachain disulfides connect Cys-42–Cys-132, Cys-44–Cys-60, Cys-59–Cys-112, Cys-65–Cys-138, Cys-66–Cys-105, Cys-73–Cys-98, and Cys-91–Cys-103. Ca(2+)-binding residues include Gly-45 and Gly-47. Residue His-63 is part of the active site. Asp-106 is a catalytic residue.

This sequence belongs to the phospholipase A2 family. Group II subfamily. K49 sub-subfamily. The cofactor is Ca(2+). In terms of tissue distribution, expressed by the venom gland.

The protein resides in the secreted. It carries out the reaction a 1,2-diacyl-sn-glycero-3-phosphocholine + H2O = a 1-acyl-sn-glycero-3-phosphocholine + a fatty acid + H(+). In terms of biological role, snake venom phospholipase A2 (PLA2) that has strong myotoxic activity with a low phospholipase A2 activity. PLA2 catalyzes the calcium-dependent hydrolysis of the 2-acyl groups in 3-sn-phosphoglycerides. This Protobothrops flavoviridis (Habu) protein is Basic phospholipase A2 BP-I.